A 260-amino-acid polypeptide reads, in one-letter code: Hydroxyacylglutathione hydrolase (260 aa).

Zn(2+) contacts are provided by H61, H63, D65, H66, H119, D138, and H176.

It belongs to the metallo-beta-lactamase superfamily. Glyoxalase II family. As to quaternary structure, monomer. The cofactor is Zn(2+).

It carries out the reaction an S-(2-hydroxyacyl)glutathione + H2O = a 2-hydroxy carboxylate + glutathione + H(+). It participates in secondary metabolite metabolism; methylglyoxal degradation; (R)-lactate from methylglyoxal: step 2/2. Thiolesterase that catalyzes the hydrolysis of S-D-lactoyl-glutathione to form glutathione and D-lactic acid. This Brucella suis (strain ATCC 23445 / NCTC 10510) protein is Hydroxyacylglutathione hydrolase.